A 378-amino-acid polypeptide reads, in one-letter code: Erythronate-4-phosphate dehydrogenase (378 aa).

Residues Ser45 and Thr66 each coordinate substrate. NAD(+)-binding residues include Asp146 and Thr175. Arg208 is a catalytic residue. Asp232 is an NAD(+) binding site. The active site involves Glu237. His254 serves as the catalytic Proton donor. Gly257 provides a ligand contact to NAD(+). Tyr258 provides a ligand contact to substrate.

This sequence belongs to the D-isomer specific 2-hydroxyacid dehydrogenase family. PdxB subfamily. Homodimer.

Its subcellular location is the cytoplasm. The enzyme catalyses 4-phospho-D-erythronate + NAD(+) = (R)-3-hydroxy-2-oxo-4-phosphooxybutanoate + NADH + H(+). It functions in the pathway cofactor biosynthesis; pyridoxine 5'-phosphate biosynthesis; pyridoxine 5'-phosphate from D-erythrose 4-phosphate: step 2/5. Its function is as follows. Catalyzes the oxidation of erythronate-4-phosphate to 3-hydroxy-2-oxo-4-phosphonooxybutanoate. The chain is Erythronate-4-phosphate dehydrogenase from Enterobacter sp. (strain 638).